The chain runs to 561 residues: MDGDIEHLLFIYALQNAVKHDSAPKSGTVIGTVLGKHPEFRSRARELGPLAGKAVAQVGKMSAADRKSRLEALAPELLAELTETHEHVRKLPDLEGAENGVVMRFAPNPSGPLHLGHARASILNDYYVRRYGGRYVLRVEDTDPKRVDPDAYAMVLEDVEWLGLGITDIVYQSDRLDIYYDWCRKLIELGGAYVCVCDSERFRELKLKGKACPCRELTVEENLELWQQMLDGEFYEGDVTVRVKTDLAHPDPAMRDYSAMRIVNAPLHPRVDATVFPLMNFSVAVDDHLLGITHVIRGKDHIANTRRQRYIFDYFGWKPPVYRHYGRMGISGVVLSTSGMREGINSGLYTGWDDIHLGTMRAIARRGIEPEAVRNAMVDIGIGETDISFSWENLYSRNKELVDPKANRYFFVPDPVEVTVEGAPRREAHAALHPNDPSRGVRTLVAEEAILLPRADIEGKSMVRLKDLYNVKIAWDGDTPRVSYAGDSLEEARHEKAPIIQWLPADAKLPCTLLRQDGSLEGFCEPLVAGETDRVVQFERIGFARIDSADGGRVSAYFAHR.

The 'HIGH' region motif lies at 107-117 (PNPSGPLHLGH).

Belongs to the class-I aminoacyl-tRNA synthetase family. Glutamate--tRNA ligase type 2 subfamily.

The protein localises to the cytoplasm. It catalyses the reaction tRNA(Glu) + L-glutamate + ATP = L-glutamyl-tRNA(Glu) + AMP + diphosphate. Functionally, catalyzes the attachment of glutamate to tRNA(Glu) in a two-step reaction: glutamate is first activated by ATP to form Glu-AMP and then transferred to the acceptor end of tRNA(Glu). In Methanoculleus marisnigri (strain ATCC 35101 / DSM 1498 / JR1), this protein is Glutamate--tRNA ligase.